The primary structure comprises 534 residues: Nucleolar protein 58 (534 aa).

The residue at position 34 (threonine 34) is a Phosphothreonine. The residue at position 109 (serine 109) is a Phosphoserine. A Glycyl lysine isopeptide (Lys-Gly) (interchain with G-Cter in SUMO2) cross-link involves residue lysine 157. Residues isoleucine 282–aspartate 400 enclose the Nop domain. Serine 304 and serine 351 each carry phosphoserine. Residues lysine 353, lysine 411, lysine 415, lysine 422, lysine 426, lysine 441, lysine 444, and lysine 465 each participate in a glycyl lysine isopeptide (Lys-Gly) (interchain with G-Cter in SUMO2) cross-link. Residue lysine 467 forms a Glycyl lysine isopeptide (Lys-Gly) (interchain with G-Cter in SUMO); alternate linkage. Lysine 467 is covalently cross-linked (Glycyl lysine isopeptide (Lys-Gly) (interchain with G-Cter in SUMO1); alternate). Residue lysine 467 forms a Glycyl lysine isopeptide (Lys-Gly) (interchain with G-Cter in SUMO2); alternate linkage. Residues valine 470–glutamate 486 show a composition bias toward acidic residues. Residues valine 470–aspartate 534 form a disordered region. Lysine 490 is covalently cross-linked (Glycyl lysine isopeptide (Lys-Gly) (interchain with G-Cter in SUMO2)). The span at lysine 490–histidine 500 shows a compositional bias: basic residues. Lysine 502 participates in a covalent cross-link: Glycyl lysine isopeptide (Lys-Gly) (interchain with G-Cter in SUMO); alternate. Lysine 502 is covalently cross-linked (Glycyl lysine isopeptide (Lys-Gly) (interchain with G-Cter in SUMO2); alternate). Serine 507 and serine 519 each carry phosphoserine. Residues lysine 522–aspartate 534 show a composition bias toward basic residues.

Belongs to the NOP5/NOP56 family. As to quaternary structure, core component of box C/D small nucleolar ribonucleoprotein (snoRNP) particles; the core proteins SNU13, NOP56, NOP58 and FBL or FBLL1 assemble stepwise onto the snoRNA. Interacts with NOLC1/Nopp140. Interacts with NOPCHAP1, NUFIP1, RUVBL1 and RUVBL2; NOPCHAP1 bridges the association of NOP58 with RUVBL1:RUVBL2 and NUFIP1. Interacts with PIH1D1. Part of the small subunit (SSU) processome, composed of more than 70 proteins and the RNA chaperone small nucleolar RNA (snoRNA) U3. Post-translationally, sumoylation is essential for high-affinity binding to snoRNAs.

The protein localises to the nucleus. The protein resides in the nucleolus. It localises to the nucleoplasm. Required for the biogenesis of box C/D snoRNAs such as U3, U8 and U14 snoRNAs. Part of the small subunit (SSU) processome, first precursor of the small eukaryotic ribosomal subunit. During the assembly of the SSU processome in the nucleolus, many ribosome biogenesis factors, an RNA chaperone and ribosomal proteins associate with the nascent pre-rRNA and work in concert to generate RNA folding, modifications, rearrangements and cleavage as well as targeted degradation of pre-ribosomal RNA by the RNA exosome. Core component of box C/D small nucleolar ribonucleoprotein (snoRNP) complexes that function in methylation of multiple sites on ribosomal RNAs (rRNAs) and messenger RNAs (mRNAs). In Rattus norvegicus (Rat), this protein is Nucleolar protein 58 (Nop58).